A 280-amino-acid polypeptide reads, in one-letter code: Dermonecrotic toxin LgSicTox-alphaIA1 (280 aa).

The active site involves His12. Mg(2+)-binding residues include Glu32 and Asp34. Residue His48 is the Nucleophile of the active site. The cysteines at positions 52 and 58 are disulfide-linked. Position 92 (Asp92) interacts with Mg(2+).

It belongs to the arthropod phospholipase D family. Class I subfamily. Requires Mg(2+) as cofactor. Expressed by the venom gland.

The protein localises to the secreted. It carries out the reaction an N-(acyl)-sphingosylphosphocholine = an N-(acyl)-sphingosyl-1,3-cyclic phosphate + choline. The catalysed reaction is an N-(acyl)-sphingosylphosphoethanolamine = an N-(acyl)-sphingosyl-1,3-cyclic phosphate + ethanolamine. It catalyses the reaction a 1-acyl-sn-glycero-3-phosphocholine = a 1-acyl-sn-glycero-2,3-cyclic phosphate + choline. The enzyme catalyses a 1-acyl-sn-glycero-3-phosphoethanolamine = a 1-acyl-sn-glycero-2,3-cyclic phosphate + ethanolamine. Functionally, dermonecrotic toxins cleave the phosphodiester linkage between the phosphate and headgroup of certain phospholipids (sphingolipid and lysolipid substrates), forming an alcohol (often choline) and a cyclic phosphate. This toxin acts on sphingomyelin (SM). It may also act on ceramide phosphoethanolamine (CPE), lysophosphatidylcholine (LPC) and lysophosphatidylethanolamine (LPE), but not on lysophosphatidylserine (LPS), and lysophosphatidylglycerol (LPG). It acts by transphosphatidylation, releasing exclusively cyclic phosphate products as second products. Induces dermonecrosis, hemolysis, increased vascular permeability, edema, inflammatory response, and platelet aggregation. The sequence is that of Dermonecrotic toxin LgSicTox-alphaIA1 from Loxosceles gaucho (Spider).